We begin with the raw amino-acid sequence, 490 residues long: Transcription factor MYB101 (490 aa).

The interval 1–21 (MDGGGETTATATMEGRGLKKG) is disordered. 2 consecutive HTH myb-type domains span residues 15 to 67 (GRGL…ANHL) and 68 to 122 (RPNL…KRRQ). 2 DNA-binding regions (H-T-H motif) span residues 43–67 (WNAV…ANHL) and 95–118 (WARM…NTRM). A disordered region spans residues 168-206 (YTNSSNTSSSSSSFSSSSSQPSKRLRPDPLVSTNPGLNP). A compositionally biased stretch (low complexity) spans 169–186 (TNSSNTSSSSSSFSSSSS).

In terms of tissue distribution, present mostly in flowers, siliques and floral shoot tips. Expression is restricted to the subapical pith cells of both vegetative and flowering plants and to the hypocotyl hook. Expressed in pollen grains and pollen tube. Mostly expressed in mature pollen grains, and, to a lower extent, in inflorescences and siliques.

The protein localises to the nucleus. Functionally, transcription activator. Binds to 5'-CAACTGTC-3' and/or 5'-TAACAAA-3' motif in target gene promoter (e.g. alpha-amylase) to promote their expression. Positive regulator of abscisic acid (ABA) responses leading to growth arrest during seed germination. Promotes the expression of aleurone-related genes (e.g. CP1, CP, GASA1, BXL1 and BXL2) in seeds. Together with MYB33 and MYB65, promotes the programmed cell death (PCD) leading to vacuolation of protein storage vacuoles (PSVs) in the aleurone layers during seed germination. Maybe involved in the regulation of leaves lamina morphogenesis. Involved in pollen grain development. Together with MYB97 and MYB120, functions as a male factor that controls pollen tube-synergid interaction in fertilization. Required for pollen tube growth arrest and sperm cell release in the female gametophyte, probably via the regulation of pollen tube-specific gene expression. This is Transcription factor MYB101 from Arabidopsis thaliana (Mouse-ear cress).